A 397-amino-acid chain; its full sequence is Acid extracellular protease (397 aa).

A signal peptide spans 1–17; the sequence is MQFSLATLTTLLAFVAA. Residues 61-378 form the Peptidase A1 domain; that stretch reads YQVQISLGGQ…DLERDEVSIA (318 aa). Aspartate 77 is an active-site residue. N-linked (GlcNAc...) asparagine glycosylation is present at asparagine 88. Cysteine 93 and cysteine 100 are joined by a disulfide. Aspartate 264 is an active-site residue. Cysteine 303 and cysteine 343 are oxidised to a cystine. N-linked (GlcNAc...) asparagine glycosylation is found at asparagine 310 and asparagine 314.

This sequence belongs to the peptidase A1 family.

Its subcellular location is the secreted. The chain is Acid extracellular protease (AXP1) from Yarrowia lipolytica (strain CLIB 122 / E 150) (Yeast).